Consider the following 299-residue polypeptide: Diaminopimelate epimerase (299 aa).

2 residues coordinate substrate: Asn-11 and Asn-63. The active-site Proton donor is the Cys-72. Substrate-binding positions include 73–74, Asn-211, and 229–230; these read GN and ER. Residue Cys-238 is the Proton acceptor of the active site. 239–240 is a substrate binding site; sequence GT.

It belongs to the diaminopimelate epimerase family. In terms of assembly, homodimer.

The protein resides in the cytoplasm. It catalyses the reaction (2S,6S)-2,6-diaminopimelate = meso-2,6-diaminopimelate. Its pathway is amino-acid biosynthesis; L-lysine biosynthesis via DAP pathway; DL-2,6-diaminopimelate from LL-2,6-diaminopimelate: step 1/1. In terms of biological role, catalyzes the stereoinversion of LL-2,6-diaminopimelate (L,L-DAP) to meso-diaminopimelate (meso-DAP), a precursor of L-lysine and an essential component of the bacterial peptidoglycan. This chain is Diaminopimelate epimerase, found in Natranaerobius thermophilus (strain ATCC BAA-1301 / DSM 18059 / JW/NM-WN-LF).